Here is a 232-residue protein sequence, read N- to C-terminus: Single-stranded DNA-binding protein (232 aa).

Acidic residues-rich tracts occupy residues 190-200 (GEDEWADEVED) and 216-232 (EWQEDEHEETPDDDEDF). Residues 190–232 (GEDEWADEVEDGGYTASESRQSRDEQEWQEDEHEETPDDDEDF) form a disordered region. The segment at 213–232 (DEQEWQEDEHEETPDDDEDF) is dimerization and interaction with the viral DNA polymerase and helicase.

It belongs to the Teseptimavirus single-stranded DNA-binding protein family. As to quaternary structure, homodimer. Interacts (via C-terminus) with the viral DNA polymerase. Interacts with the viral helicase/primase. Part of the replicase complex that includes the DNA polymerase, the primase/helicase and the single-stranded DNA binding protein.

Single-stranded DNA-binding protein that participates in viral DNA replication, formation of concatemers, recombination and repair of double-stranded breaks. Coats the lagging-strand ssDNA as the replication fork advances and stimulates the activities of viral DNA polymerase and primase/helicase. Coordinates simultaneous synthesis of leading- and lagging-strands. Together with DNA primase/helicase, promotes pairing of two homologous DNA molecules containing complementary single-stranded regions and mediates homologous DNA strand exchange. Also promotes the formation of joint molecules. Disrupts loops, hairpins and other secondary structures present on ssDNA to reduce and eliminate pausing of viral DNA polymerase at specific sites during elongation. The sequence is that of Single-stranded DNA-binding protein (2.5) from Enterobacteria phage T3 (Bacteriophage T3).